We begin with the raw amino-acid sequence, 576 residues long: Septation ring formation regulator EzrA (576 aa).

Residues 1–7 (MSSTVII) are Extracellular-facing. The chain crosses the membrane as a helical span at residues 8-26 (LIVVLLVILVAFYAFAILM). Over 27-576 (RKKTEDRILA…FKNKPTPDYL (550 aa)) the chain is Cytoplasmic. Coiled-coil stretches lie at residues 105–134 (RARE…VAQL) and 277–301 (EQFE…LYAI).

Belongs to the EzrA family.

It is found in the cell membrane. Negative regulator of FtsZ ring formation; modulates the frequency and position of FtsZ ring formation. Inhibits FtsZ ring formation at polar sites. Interacts either with FtsZ or with one of its binding partners to promote depolymerization. This Lactococcus lactis subsp. lactis (strain IL1403) (Streptococcus lactis) protein is Septation ring formation regulator EzrA.